Consider the following 274-residue polypeptide: 2,3,4,5-tetrahydropyridine-2,6-dicarboxylate N-succinyltransferase (274 aa).

Substrate-binding residues include R106 and D143.

The protein belongs to the transferase hexapeptide repeat family. As to quaternary structure, homotrimer.

It is found in the cytoplasm. It catalyses the reaction (S)-2,3,4,5-tetrahydrodipicolinate + succinyl-CoA + H2O = (S)-2-succinylamino-6-oxoheptanedioate + CoA. Its pathway is amino-acid biosynthesis; L-lysine biosynthesis via DAP pathway; LL-2,6-diaminopimelate from (S)-tetrahydrodipicolinate (succinylase route): step 1/3. The chain is 2,3,4,5-tetrahydropyridine-2,6-dicarboxylate N-succinyltransferase from Rickettsia rickettsii (strain Sheila Smith).